The following is a 406-amino-acid chain: Phosphopentomutase (406 aa).

Aspartate 10, aspartate 305, histidine 310, aspartate 346, histidine 347, and histidine 358 together coordinate Mn(2+).

The protein belongs to the phosphopentomutase family. Requires Mn(2+) as cofactor.

It localises to the cytoplasm. The enzyme catalyses 2-deoxy-alpha-D-ribose 1-phosphate = 2-deoxy-D-ribose 5-phosphate. It catalyses the reaction alpha-D-ribose 1-phosphate = D-ribose 5-phosphate. It participates in carbohydrate degradation; 2-deoxy-D-ribose 1-phosphate degradation; D-glyceraldehyde 3-phosphate and acetaldehyde from 2-deoxy-alpha-D-ribose 1-phosphate: step 1/2. Isomerase that catalyzes the conversion of deoxy-ribose 1-phosphate (dRib-1-P) and ribose 1-phosphate (Rib-1-P) to deoxy-ribose 5-phosphate (dRib-5-P) and ribose 5-phosphate (Rib-5-P), respectively. The sequence is that of Phosphopentomutase from Rhizobium meliloti (strain 1021) (Ensifer meliloti).